The chain runs to 188 residues: Putative manganese efflux pump MntP (188 aa).

A run of 6 helical transmembrane segments spans residues 3–23 (ISAT…ASIG), 41–61 (LIFG…GMLA), 62–82 (SQFI…FLGG), 106–128 (WILV…GLAF), 143–163 (ATLI…PLLG), and 168–188 (ILGG…HFAG).

It belongs to the MntP (TC 9.B.29) family.

The protein localises to the cell inner membrane. Its function is as follows. Probably functions as a manganese efflux pump. The protein is Putative manganese efflux pump MntP of Enterobacter sp. (strain 638).